The chain runs to 191 residues: Probable DNA-directed RNA polymerase subunit delta (191 aa).

The 70-residue stretch at 14-83 folds into the HTH HARE-type domain; the sequence is LSMIEVARAI…GDNKWGLRSW (70 aa). Acidic residues-rich tracts occupy residues 119–133 and 143–191; these read EDAI…EDEN and YDND…ETND. The interval 119 to 191 is disordered; that stretch reads EDAIDYNDDD…DDDYEDETND (73 aa).

Belongs to the RpoE family. As to quaternary structure, RNAP is composed of a core of 2 alpha, a beta and a beta' subunits. The core is associated with a delta subunit and one of several sigma factors.

Participates in both the initiation and recycling phases of transcription. In the presence of the delta subunit, RNAP displays an increased specificity of transcription, a decreased affinity for nucleic acids, and an increased efficiency of RNA synthesis because of enhanced recycling. The sequence is that of Probable DNA-directed RNA polymerase subunit delta from Streptococcus thermophilus (strain ATCC BAA-491 / LMD-9).